Here is a 177-residue protein sequence, read N- to C-terminus: MSRIGKKPIPVPSGVTASIEGQLIKAKGPKGELSYIVNDEVLVKLEDNIVSVTPRDQSKDARSKWGMSHSMIRNIFCGVKDGFEKKLEISGVGYRAALQGKNIQLSLGFSHDVVYKVPSDVSVAVPKPTEIVVSGIDKQKVGQIAAEIRGYRGPEPYKGKGIKYVDESLVRKEGKKK.

Belongs to the universal ribosomal protein uL6 family. As to quaternary structure, part of the 50S ribosomal subunit.

Functionally, this protein binds to the 23S rRNA, and is important in its secondary structure. It is located near the subunit interface in the base of the L7/L12 stalk, and near the tRNA binding site of the peptidyltransferase center. The polypeptide is Large ribosomal subunit protein uL6 (Bartonella bacilliformis (strain ATCC 35685 / KC583 / Herrer 020/F12,63)).